The following is a 143-amino-acid chain: Large ribosomal subunit protein uL11 (143 aa).

The protein belongs to the universal ribosomal protein uL11 family. As to quaternary structure, part of the ribosomal stalk of the 50S ribosomal subunit. Interacts with L10 and the large rRNA to form the base of the stalk. L10 forms an elongated spine to which L12 dimers bind in a sequential fashion forming a multimeric L10(L12)X complex. Post-translationally, one or more lysine residues are methylated.

Its function is as follows. Forms part of the ribosomal stalk which helps the ribosome interact with GTP-bound translation factors. This Dechloromonas aromatica (strain RCB) protein is Large ribosomal subunit protein uL11.